Here is a 127-residue protein sequence, read N- to C-terminus: Large ribosomal subunit protein bL12 (127 aa).

The disordered stretch occupies residues 98–127 (PKPIKEGAPKAEAESLKSKLEEAGAEVELK).

Belongs to the bacterial ribosomal protein bL12 family. In terms of assembly, homodimer. Part of the ribosomal stalk of the 50S ribosomal subunit. Forms a multimeric L10(L12)X complex, where L10 forms an elongated spine to which 2 to 4 L12 dimers bind in a sequential fashion. Binds GTP-bound translation factors.

Functionally, forms part of the ribosomal stalk which helps the ribosome interact with GTP-bound translation factors. Is thus essential for accurate translation. The chain is Large ribosomal subunit protein bL12 from Amoebophilus asiaticus (strain 5a2).